The chain runs to 333 residues: Holliday junction branch migration complex subunit RuvB (333 aa).

Positions 1–173 (MTAPENLDAA…FGIIEHLEYY (173 aa)) are large ATPase domain (RuvB-L). Residues Leu11, Arg12, Gly53, Lys56, Thr57, Thr58, 120-122 (EDF), Arg163, Tyr173, and Arg210 each bind ATP. Thr57 lines the Mg(2+) pocket. A small ATPAse domain (RuvB-S) region spans residues 174 to 244 (TAEEIATNLL…RAQSALDKLG (71 aa)). Residues 247–333 (SAGLDDRDKK…IDDGNGIFLN (87 aa)) form a head domain (RuvB-H) region. DNA is bound by residues Arg302 and Arg307.

This sequence belongs to the RuvB family. In terms of assembly, homohexamer. Forms an RuvA(8)-RuvB(12)-Holliday junction (HJ) complex. HJ DNA is sandwiched between 2 RuvA tetramers; dsDNA enters through RuvA and exits via RuvB. An RuvB hexamer assembles on each DNA strand where it exits the tetramer. Each RuvB hexamer is contacted by two RuvA subunits (via domain III) on 2 adjacent RuvB subunits; this complex drives branch migration. In the full resolvosome a probable DNA-RuvA(4)-RuvB(12)-RuvC(2) complex forms which resolves the HJ.

Its subcellular location is the cytoplasm. It catalyses the reaction ATP + H2O = ADP + phosphate + H(+). The RuvA-RuvB-RuvC complex processes Holliday junction (HJ) DNA during genetic recombination and DNA repair, while the RuvA-RuvB complex plays an important role in the rescue of blocked DNA replication forks via replication fork reversal (RFR). RuvA specifically binds to HJ cruciform DNA, conferring on it an open structure. The RuvB hexamer acts as an ATP-dependent pump, pulling dsDNA into and through the RuvAB complex. RuvB forms 2 homohexamers on either side of HJ DNA bound by 1 or 2 RuvA tetramers; 4 subunits per hexamer contact DNA at a time. Coordinated motions by a converter formed by DNA-disengaged RuvB subunits stimulates ATP hydrolysis and nucleotide exchange. Immobilization of the converter enables RuvB to convert the ATP-contained energy into a lever motion, pulling 2 nucleotides of DNA out of the RuvA tetramer per ATP hydrolyzed, thus driving DNA branch migration. The RuvB motors rotate together with the DNA substrate, which together with the progressing nucleotide cycle form the mechanistic basis for DNA recombination by continuous HJ branch migration. Branch migration allows RuvC to scan DNA until it finds its consensus sequence, where it cleaves and resolves cruciform DNA. The chain is Holliday junction branch migration complex subunit RuvB from Deinococcus radiodurans (strain ATCC 13939 / DSM 20539 / JCM 16871 / CCUG 27074 / LMG 4051 / NBRC 15346 / NCIMB 9279 / VKM B-1422 / R1).